Reading from the N-terminus, the 1848-residue chain is Cellulose-binding protein A (1848 aa).

An N-terminal signal peptide occupies residues 1 to 28 (MQKKKSLNLLLALMMVFALVLPSIPALA). Positions 29-190 (ATSSMSVEFY…GAKVLGTAPG (162 aa)) constitute a CBM3 domain. 9 consecutive Cohesin domains span residues 291 to 428 (VTAT…TVTI), 435 to 570 (MQIS…SVTI), 668 to 801 (VTAT…SVTI), 810 to 943 (VTAT…SVTI), 952 to 1085 (VTAT…SVTI), 1094 to 1227 (VTAT…SVTI), 1236 to 1369 (VTAT…SVTI), 1377 to 1511 (VKAT…RLTI), and 1709 to 1847 (FAVK…SVKV).

In terms of processing, the N-terminus is blocked. Glycosylated.

It is found in the secreted. Its function is as follows. Binds to cellulose fibers and coordinates cellulase enzymes. The chain is Cellulose-binding protein A (cbpA) from Clostridium cellulovorans.